A 648-amino-acid chain; its full sequence is EF-hand domain-containing protein 1 (648 aa).

The interval 1–45 (MGTNPVHGLPFLPGSSFTDSTKTAFHRSQTLNYRNGYAVVRRPTM) is required for its localization in the mitotic spindle and interaction with alpha-tubulin. 3 consecutive DM10 domains span residues 93 to 198 (DKKV…ESQG), 239 to 359 (DKQV…KDKF), and 416 to 520 (DNKV…ESNA). The 36-residue stretch at 582–617 (SYKENLRETFQMYDKDESGYVDRETFFKICETLNVP) folds into the EF-hand domain.

Microtubule inner protein component of sperm flagellar doublet microtubules. Interacts with the C-terminus of CACNA1E. Interacts with alpha-tubulin. As to expression, expressed in adult brain including hippocampus, cerebellum, cerebral cortex, thalamus, hypothalamus, amygdala and upper brainstem. Expressed in soma and dentrites of pyramidal neurons of the hippocampal CA1 region, pyramidal neurons of the cerebral cortex and Purkinje cells of cerebellum. Highly expressed in testis, trachea, and oviduct, moderately in lung, and slightly in brain. Highly expressed in sperm flagella and tracheal cilia (at protein level).

The protein resides in the cytoplasm. It localises to the cytoskeleton. Its subcellular location is the cilium axoneme. The protein localises to the flagellum axoneme. It is found in the microtubule organizing center. The protein resides in the centrosome. It localises to the spindle. Its subcellular location is the spindle pole. Functionally, microtubule inner protein (MIP) part of the dynein-decorated doublet microtubules (DMTs) in cilia axoneme, which is required for motile cilia beating. Microtubule-associated protein which regulates cell division and neuronal migration during cortical development. Necessary for radial and tangential cell migration during brain development, possibly acting as a regulator of cell morphology and process formation during migration. May enhance calcium influx through CACNA1E and stimulate programmed cell death. Overexpression of EFHC1 in hippocampal primary culture neurons induced apoptosis. The polypeptide is EF-hand domain-containing protein 1 (Efhc1) (Mus musculus (Mouse)).